The chain runs to 447 residues: Putative short-chain fatty acid transporter (447 aa).

The next 11 helical transmembrane spans lie at 17–37 (LPDPLIFAVLLTFVTFICAWG), 49–69 (MWGNGFWNLLGFGMQMALIVV), 98–118 (VVLVTFMGSIACIINWGFGLV), 136–156 (YALLIACAYIAFMTWGGGFSG), 188–208 (TLFSGYNIFITLSLVICLPFI), 252–272 (FLAYTIGALGYSYLGMYFYKN), 284–304 (IFLITGIVLHGSPMAYMRAII), 321–341 (AGVQLMMEHSGLGGLITEFFI), 359–379 (FINFAVPSGGGHWVIQGPFVI), 402–422 (WMNMAQPFWALPALGIAGLGV), and 427–447 (GFCMTALIFTAPIFIIGLYFL).

The protein resides in the cell inner membrane. Its function is as follows. May be responsible for the uptake of short-chain fatty acids. In Haemophilus influenzae (strain ATCC 51907 / DSM 11121 / KW20 / Rd), this protein is Putative short-chain fatty acid transporter (atoE).